The primary structure comprises 572 residues: MRTSQYLLSTLKETPADAEVISHQLMLRAGMIRKLASGLYTWLPTGVRVLKKVENIVREEMNNAGAIEVLMPVVQPSELWQESGRWEQYGPELLRIADRGDRPFVLGPTHEEVITDLIRNELSSYKQLPLNFYQIQTKFRDEVRPRFGVMRSREFLMKDAYSFHTSQESLQETYDAMYAAYSKIFSRMGLDFRAVQADTGSIGGSASHEFQVLAQSGEDDVVFSDTSDYAANIELAEAIAPKEPRAAATQEMTLVDTPNAKTIAELVEQFNLPIEKTVKTLLVKAVEGSSFPLVALLVRGDHELNEVKAEKLPQVASPLTFATEEEIRAVVKAGPGSLGPVNMPIPVVIDRTVAAMSDFAAGANIDGKHYFGINWDRDVATPEVADIRNVVAGDPSPDGQGTLLIKRGIEVGHIFQLGTKYSEALKASVQGEDGRNQILTMGCYGIGVTRVVAAAIEQNYDERGIVWPDAIAPFQVAILPMNMHKSFRVQELAEKLYSELRAQGIEVLLDDRKERPGVMFADMELIGIPHTIVLGDRNLDNDDIEYKYRRNGEKQLIKTGDIVDYLVKQIKG.

This sequence belongs to the class-II aminoacyl-tRNA synthetase family. ProS type 1 subfamily. In terms of assembly, homodimer.

It is found in the cytoplasm. It carries out the reaction tRNA(Pro) + L-proline + ATP = L-prolyl-tRNA(Pro) + AMP + diphosphate. Its function is as follows. Catalyzes the attachment of proline to tRNA(Pro) in a two-step reaction: proline is first activated by ATP to form Pro-AMP and then transferred to the acceptor end of tRNA(Pro). As ProRS can inadvertently accommodate and process non-cognate amino acids such as alanine and cysteine, to avoid such errors it has two additional distinct editing activities against alanine. One activity is designated as 'pretransfer' editing and involves the tRNA(Pro)-independent hydrolysis of activated Ala-AMP. The other activity is designated 'posttransfer' editing and involves deacylation of mischarged Ala-tRNA(Pro). The misacylated Cys-tRNA(Pro) is not edited by ProRS. This is Proline--tRNA ligase from Escherichia fergusonii (strain ATCC 35469 / DSM 13698 / CCUG 18766 / IAM 14443 / JCM 21226 / LMG 7866 / NBRC 102419 / NCTC 12128 / CDC 0568-73).